The primary structure comprises 82 residues: Small ribosomal subunit protein bS18 (82 aa).

It belongs to the bacterial ribosomal protein bS18 family. Part of the 30S ribosomal subunit. Forms a tight heterodimer with protein bS6.

Its function is as follows. Binds as a heterodimer with protein bS6 to the central domain of the 16S rRNA, where it helps stabilize the platform of the 30S subunit. The sequence is that of Small ribosomal subunit protein bS18 from Bifidobacterium adolescentis (strain ATCC 15703 / DSM 20083 / NCTC 11814 / E194a).